We begin with the raw amino-acid sequence, 590 residues long: Protein NRT1/ PTR FAMILY 6.4 (590 aa).

The segment at 1 to 24 is disordered; that stretch reads MVHVSSSHGAKDGSEEAYDYRGNP. A run of 12 helical transmembrane segments spans residues 48-68, 73-93, 104-124, 147-167, 197-217, 222-242, 332-352, 371-391, 419-439, 453-473, 492-512, and 533-553; these read ICVM…LHIS, ATIV…GGFL, VAIS…ATTI, GHQL…GGGI, FYFS…YVQD, GWGY…LLCG, VKLV…WTIY, GSFT…ILLF, IGVG…IENA, AFWL…AYVG, GLFL…VSLV, and FYWL…VFAM.

The protein belongs to the major facilitator superfamily. Proton-dependent oligopeptide transporter (POT/PTR) (TC 2.A.17) family. As to expression, expressed in leaves, flowers and siliques. Detected in leaves.

Its subcellular location is the membrane. Low-affinity nitrate transporter. This is Protein NRT1/ PTR FAMILY 6.4 (NPF6.4) from Arabidopsis thaliana (Mouse-ear cress).